We begin with the raw amino-acid sequence, 553 residues long: Transcriptional regulator HilA (553 aa).

A DNA-binding region (ompR/PhoB-type) is located at residues 11 to 107; the sequence is NKKFVFDDFI…LYGQGYRFNR (97 aa). Residue Asp-62 is modified to 4-aspartylphosphate. A TPR repeat occupies 372 to 405; sequence ADIKYYYGWNLFMAGQLEEALQTINECLKLDPTR.

Its function is as follows. The main transcriptional regulator of the Salmonella pathogenicity island 1 (SPI1) gene expression. Activates the expression of invasion genes by a direct action at their promoters and also indirectly by increasing the level of InvF. Also binds upstream of prgH and directly activates the expression of prgHIJK operon. This Salmonella typhimurium (strain LT2 / SGSC1412 / ATCC 700720) protein is Transcriptional regulator HilA (hilA).